A 528-amino-acid polypeptide reads, in one-letter code: MSEPTTTPVVGNSASGDSAEQHDLGQKRGKGGNWNRPRGDHQAKKQKMDRRGDRQREQEKQGEGRDTRRKTDGPLVADEVRQPKRKVACMIGYCGTGYHGMQLNPPQKTIEGDIFQAFVKAGAISQNNADDPKKSAFMRAARTDKGVHAAGNVISLKMIIEDENIVEKINSHLPEQLRVWGVSRTNKAFECRKLCSSRVYEYLMPTYSFLNPRPGTVMSEKLLKDGTSPDEEGKKYWESVAADLESQGVSYDEWMKRACIDEIKGEETKEVAESEVKTDSKTDAATLEKIKAVERRHREEFRISGERLAKIREILKIYEGTHNFHNFTLGKAFKDPSAMRTMKSLTCSDPFLIDGTEWVSIKIHGQSFMLHQIRKMISMVALSVRCNADPQKLIPQTFEKARINIPKAPALGLLLERPVYDSYNKKLQGEFGREGVHFDNWNDQIEAFKHKFIYDKIYAEEKGQHVFHAFFSFVDVFTGDASFDFLLKQGITKECTTDYMNKKAKEEGKEIKKLEEDDDEVANEQNEG.

Residues 1 to 18 are compositionally biased toward polar residues; that stretch reads MSEPTTTPVVGNSASGDS. The interval 1 to 80 is disordered; the sequence is MSEPTTTPVV…TDGPLVADEV (80 aa). A compositionally biased stretch (basic and acidic residues) spans 49–80; it reads DRRGDRQREQEKQGEGRDTRRKTDGPLVADEV. D144 acts as the Nucleophile in catalysis. Basic and acidic residues predominate over residues 505 to 515; the sequence is KEEGKEIKKLE. The segment at 505 to 528 is disordered; sequence KEEGKEIKKLEEDDDEVANEQNEG. Residues 516-528 show a composition bias toward acidic residues; sequence EDDDEVANEQNEG.

This sequence belongs to the tRNA pseudouridine synthase TruA family. Zn(2+) serves as cofactor.

Its subcellular location is the nucleus. The catalysed reaction is a uridine in tRNA = a pseudouridine in tRNA. It carries out the reaction uridine in snRNA = pseudouridine in snRNA. It catalyses the reaction a uridine in mRNA = a pseudouridine in mRNA. Functionally, formation of pseudouridine at positions 27 and 28 in the anticodon stem and loop of transfer RNAs; at positions 34 and 36 of intron-containing precursor tRNA(Ile) and at position 35 in the intron-containing tRNA(Tyr). Catalyzes pseudouridylation at position 44 in U2 snRNA. Also catalyzes pseudouridylation of mRNAs. This Yarrowia lipolytica (strain CLIB 122 / E 150) (Yeast) protein is tRNA pseudouridine synthase 1 (PUS1).